Reading from the N-terminus, the 523-residue chain is Nuclear receptor ROR-alpha (523 aa).

The segment covering 1-26 has biased composition (low complexity); that stretch reads MESAPAAPDPAASEPGSSGADAAAGS. Positions 1–63 are disordered; the sequence is MESAPAAPDP…SRGISVTKKT (63 aa). The residue at position 38 (Lys38) is an N6-methyllysine. The span at 48-57 shows a compositional bias: polar residues; the sequence is QSYSSTSRGI. NR C4-type zinc fingers lie at residues 73–93 and 109–133; these read CKIC…CEGC and CPRQ…LQKC. The segment at residues 73–138 is a DNA-binding region (nuclear receptor); the sequence is CKICGDKSSG…RLQKCLAVGM (66 aa). The tract at residues 154 to 183 is disordered; sequence DSLYAEVQKHRMQQQQRDHQQQPGEAEPLT. The residue at position 183 (Thr183) is a Phosphothreonine; by MAPK1. A Glycyl lysine isopeptide (Lys-Gly) (interchain with G-Cter in SUMO) cross-link involves residue Lys240. An NR LBD domain is found at 272-510; it reads ELEHLAQNIS…LHFPPLYKEL (239 aa). Positions 506-523 match the AF-2 motif; it reads LYKELFTSEFEPAMQIDG.

This sequence belongs to the nuclear hormone receptor family. NR1 subfamily. Monomer. Interacts (via the DNA-binding domain) with HIF1A; the interaction enhances HIF1A transcription under hypoxia through increasing protein stability. Interacts with CEBPB; the interaction disrupts the interaction CEBPB:EP300. Interacts with the coactivators NCOA2, PPARGC1A (via LXXLL motif), EP300 and MED1. Interacts with the corepressor NCOR1. Interacts with MAGED1 and CTNNB1. Interacts with CRY1 and PER2. Interacts (via AF-2 motif) with PROX1. Interacts with NRIP1. Isoform 4 interacts (via AF-2 motif) with isoform 1 of FOXP3 (via LXXLL motif). Post-translationally, phosphorylation by conventional PKCs in neurons inhibits transcriptional activity. Phosphorylated on Thr-183 by MAPK1/ERK1 in vitro. Sumoylated by SENP1 and SENP2. Sumoylation, promoted by PIAS2, PIAS3, PIAS4 but not PIAS1, enhances the transcriptional activity. Desumoylated by SENP1. In terms of processing, ubiquitinated, leading to its degradation by the proteasome. Proteasomal degradation is required for efficient transcriptional activity and is prevented by HR. Post-translationally, monomethylated at Lys-38 by EZH2, this creates a degron recognized by a DCX (DDB1-DCAF1/VPRBP-CUL4A-RBX1) E3 ubiquitin ligase complex. Widely expressed in a number of tissues. Expressed in both regulatory T-cells (Treg) and effector T-cells (Teff). Isoform 4: Highly expressed in the central nervous system, including in the cerebellum.

Its subcellular location is the nucleus. Its function is as follows. Nuclear receptor that binds DNA as a monomer to ROR response elements (RORE) containing a single core motif half-site 5'-AGGTCA-3' preceded by a short A-T-rich sequence. Key regulator of embryonic development, cellular differentiation, immunity, circadian rhythm as well as lipid, steroid, xenobiotics and glucose metabolism. Considered to have intrinsic transcriptional activity, have some natural ligands like oxysterols that act as agonists (25-hydroxycholesterol) or inverse agonists (7-oxygenated sterols), enhancing or repressing the transcriptional activity, respectively. Recruits distinct combinations of cofactors to target genes regulatory regions to modulate their transcriptional expression, depending on the tissue, time and promoter contexts. Regulates genes involved in photoreceptor development including OPN1SW, OPN1SM and ARR3 and skeletal muscle development with MYOD1. Required for proper cerebellum development. Regulates SHH gene expression, among others, to induce granule cells proliferation as well as expression of genes involved in calcium-mediated signal transduction. Regulates the circadian expression of several clock genes, including CLOCK, BMAL1, NPAS2 and CRY1. Competes with NR1D1 for binding to their shared DNA response element on some clock genes such as BMAL1, CRY1 and NR1D1 itself, resulting in NR1D1-mediated repression or RORA-mediated activation of clock genes expression, leading to the circadian pattern of clock genes expression. Therefore influences the period length and stability of the clock. Regulates genes involved in lipid metabolism such as apolipoproteins APOA1, APOA5, APOC3 and PPARG. In liver, has specific and redundant functions with RORC as positive or negative modulator of expression of genes encoding phase I and phase II proteins involved in the metabolism of lipids, steroids and xenobiotics, such as CYP7B1 and SULT2A1. Induces a rhythmic expression of some of these genes. In addition, interplays functionally with NR1H2 and NR1H3 for the regulation of genes involved in cholesterol metabolism. Also involved in the regulation of hepatic glucose metabolism through the modulation of G6PC1 and PCK1. In adipose tissue, plays a role as negative regulator of adipocyte differentiation, probably acting through dual mechanisms. May suppress CEBPB-dependent adipogenesis through direct interaction and PPARG-dependent adipogenesis through competition for DNA-binding. Downstream of IL6 and TGFB and synergistically with RORC isoform 2, is implicated in the lineage specification of uncommitted CD4(+) T-helper (T(H)) cells into T(H)17 cells, antagonizing the T(H)1 program. Probably regulates IL17 and IL17F expression on T(H) by binding to the essential enhancer conserved non-coding sequence 2 (CNS2) in the IL17-IL17F locus. Involved in hypoxia signaling by interacting with and activating the transcriptional activity of HIF1A. May inhibit cell growth in response to cellular stress. May exert an anti-inflammatory role by inducing CHUK expression and inhibiting NF-kappa-B signaling. The polypeptide is Nuclear receptor ROR-alpha (RORA) (Homo sapiens (Human)).